We begin with the raw amino-acid sequence, 40 residues long: Photosystem II reaction center protein J (40 aa).

The chain crosses the membrane as a helical span at residues 8–28 (IPLWLIGTVTGIAVIGLIGVF).

It belongs to the PsbJ family. PSII is composed of 1 copy each of membrane proteins PsbA, PsbB, PsbC, PsbD, PsbE, PsbF, PsbH, PsbI, PsbJ, PsbK, PsbL, PsbM, PsbT, PsbX, PsbY, PsbZ, Psb30/Ycf12, at least 3 peripheral proteins of the oxygen-evolving complex and a large number of cofactors. It forms dimeric complexes.

The protein localises to the plastid. Its subcellular location is the chloroplast thylakoid membrane. Its function is as follows. One of the components of the core complex of photosystem II (PSII). PSII is a light-driven water:plastoquinone oxidoreductase that uses light energy to abstract electrons from H(2)O, generating O(2) and a proton gradient subsequently used for ATP formation. It consists of a core antenna complex that captures photons, and an electron transfer chain that converts photonic excitation into a charge separation. The protein is Photosystem II reaction center protein J of Oryza nivara (Indian wild rice).